The chain runs to 357 residues: EGF-like domain-containing protein 2 (357 aa).

The signal sequence occupies residues 1–20 (MPPSLSHLFLLSTFASLALC). 2 EGF-like domains span residues 21 to 55 (SFYC…FNCG) and 61 to 93 (ISAA…PTCQ). 6 disulfide bridges follow: Cys-24–Cys-37, Cys-31–Cys-43, Cys-45–Cys-54, Cys-65–Cys-75, Cys-69–Cys-81, and Cys-83–Cys-92.

As to expression, prismatic layer of shell (at protein level). Expressed primarily in the mantle with highest level in the mantle edge and lower level in the mantle pallium.

The protein resides in the secreted. In Pinctada maxima (Silver-lipped pearl oyster), this protein is EGF-like domain-containing protein 2.